The chain runs to 92 residues: MARSIKKGPFVDGHLMKKVETEGPNSKKIIKTWSRRSTITPEFIGVSLAVHNGKKFIPVFVTENMVGHKLGEFSPTRTFHGHAADKKSKVKK.

The protein belongs to the universal ribosomal protein uS19 family.

In terms of biological role, protein S19 forms a complex with S13 that binds strongly to the 16S ribosomal RNA. This is Small ribosomal subunit protein uS19 from Trichlorobacter lovleyi (strain ATCC BAA-1151 / DSM 17278 / SZ) (Geobacter lovleyi).